A 397-amino-acid chain; its full sequence is Mannosylglycerate synthase (397 aa).

GDP-alpha-D-mannose is bound by residues 7–11 (PFKHE), isoleucine 35, glutamine 66, lysine 76, aspartate 100, and 100–101 (DA). Position 102 (aspartate 102) interacts with a divalent metal cation. (R)-glycerate-binding positions include arginine 131 and 136-139 (AMIT). 2 residues coordinate GDP-alpha-D-mannose: leucine 163 and aspartate 192. Histidine 217 is an a divalent metal cation binding site. Arginine 218 and tyrosine 220 together coordinate GDP-alpha-D-mannose.

The protein belongs to the glycosyltransferase 78 family. As to quaternary structure, homotetramer. Dimer of dimers. Mg(2+) is required as a cofactor. It depends on Ca(2+) as a cofactor. The cofactor is Mn(2+). Requires Ni(2+) as cofactor. Co(2+) serves as cofactor.

The catalysed reaction is (R)-glycerate + GDP-alpha-D-mannose = (2R)-2-O-(alpha-D-mannosyl)-glycerate + GDP + H(+). Its activity is regulated as follows. Inhibited by GDP. In terms of biological role, involved in the biosynthesis of the stress protectant 2-O-alpha-D-mannosyl glycerate (MG) which is produced in response to growth at supraoptimal temperature and salinity, and protects several enzymes against inactivation by temperature, freeze-drying and osmotic stress. Catalyzes the condensation of alpha-GDP-D-mannose (GDP-Man) with D-glycerate to produce alpha-mannosyl-D-glycerate. It is specific for GDP-Man, but it can also use alpha-GDP-D-glucose (GDP-Glc), beta-GDP-D-fructose, alpha-UDP-D-mannose and alpha-UDP-D-glucose as sugar donors. It is specific for D-glycerate, but it can also use D-lactate and glycolate as sugar acceptors. This reaction occurs with a net retention of anomeric configuration; the newly formed glycosidic linkage has the same alpha configuration as the sugar donor. The sequence is that of Mannosylglycerate synthase (mgs) from Rhodothermus marinus (Rhodothermus obamensis).